A 367-amino-acid chain; its full sequence is D-alanine--D-alanine ligase (367 aa).

The ATP-grasp domain occupies lysine 150–glutamate 357. Residue arginine 178 to glutamate 233 coordinates ATP. Positions 312, 324, and 326 each coordinate Mg(2+).

This sequence belongs to the D-alanine--D-alanine ligase family. Requires Mg(2+) as cofactor. Mn(2+) serves as cofactor.

It localises to the cytoplasm. The catalysed reaction is 2 D-alanine + ATP = D-alanyl-D-alanine + ADP + phosphate + H(+). Its pathway is cell wall biogenesis; peptidoglycan biosynthesis. Its function is as follows. Cell wall formation. The sequence is that of D-alanine--D-alanine ligase from Mycolicibacterium gilvum (strain PYR-GCK) (Mycobacterium gilvum (strain PYR-GCK)).